The primary structure comprises 123 residues: Ribosome-binding factor A (123 aa).

It belongs to the RbfA family. In terms of assembly, monomer. Binds 30S ribosomal subunits, but not 50S ribosomal subunits or 70S ribosomes.

It is found in the cytoplasm. Functionally, one of several proteins that assist in the late maturation steps of the functional core of the 30S ribosomal subunit. Associates with free 30S ribosomal subunits (but not with 30S subunits that are part of 70S ribosomes or polysomes). Required for efficient processing of 16S rRNA. May interact with the 5'-terminal helix region of 16S rRNA. The polypeptide is Ribosome-binding factor A (Solibacter usitatus (strain Ellin6076)).